We begin with the raw amino-acid sequence, 487 residues long: N-succinylglutamate 5-semialdehyde dehydrogenase (487 aa).

An NAD(+)-binding site is contributed by 221-226 (GSSRTG). Catalysis depends on residues Glu-244 and Cys-278.

The protein belongs to the aldehyde dehydrogenase family. AstD subfamily.

The enzyme catalyses N-succinyl-L-glutamate 5-semialdehyde + NAD(+) + H2O = N-succinyl-L-glutamate + NADH + 2 H(+). It participates in amino-acid degradation; L-arginine degradation via AST pathway; L-glutamate and succinate from L-arginine: step 4/5. Functionally, catalyzes the NAD-dependent reduction of succinylglutamate semialdehyde into succinylglutamate. The chain is N-succinylglutamate 5-semialdehyde dehydrogenase from Pseudomonas putida (strain ATCC 47054 / DSM 6125 / CFBP 8728 / NCIMB 11950 / KT2440).